We begin with the raw amino-acid sequence, 740 residues long: Gramillins biosynthetic cluster protein FGSG_11657 (740 aa).

Disordered stretches follow at residues 353–391, 414–434, 514–535, and 656–686; these read QADS…SSIP, SKLS…DAAS, PKEQ…GSSD, and EHEG…PQGD. Positions 656-667 are enriched in basic and acidic residues; sequence EHEGEGRADTNR. The span at 668 to 682 shows a compositional bias: polar residues; that stretch reads HVSTQSNMPTEQSLL.

It functions in the pathway mycotoxin biosynthesis. Functionally, part of the gene cluster that mediates the biosynthesis of gramillins A and B, bicyclic lipopeptides that induce cell death in maize leaves but not in wheat leaves. The nonribosomal peptide synthetase GRA1 incorporates respectively a glutamic adic (Glu), a leucine (Leu), a serine (Ser), a hydroxyglutamine (HOGln), a 2-amino decanoic acid, and 2 cysteins (CysB and CysA). The biosynthesis of 2-amino decanoic acid incorporated in gramillins could be initiated by a fatty acid synthase composed of the alpha and beta subunits FGSG_00036 and FGSG_11656. The cytochrome P450 monooxygenase FGSG_15680 could hydroxylate the fatty acid chain. Subsequent oxidation to the ketone by the oxidoreductase FGSG_00048 and transamination by aminotransferase FGSG_00049 could form 2-amino-decanoic acid. On the other hand, FGSG_15680 could also be responsible for the HO-modified glutamine at the gamma-position. Whether hydroxylation occurs on the fully assembled product or on the Gln residue prior to assembly into the gramillins requires further proof. The thioredoxin FGSG_00043 could also be required for the disulfide-bond formation between CysA and CysB. The specific involvement of the remaining proteins from the cluster is more difficult to discern, but could have broader regulatory (FGSG_00040 and FGSG_11657) or enzymatic functions (FGSG_00044 and FGSG_00045). The final C-domain of GRA1 does not possess the expected sequence of a termination CT domain, often implicated in macrocyclization and release of a cyclopeptidein fungal NRPs; and the thioesterase FGSG_00047 may act in concert with the terminal C-domain of GRA1 to catalyze the formation of the macrocyclic anhydride and release of the products. The chain is Gramillins biosynthetic cluster protein FGSG_11657 from Gibberella zeae (strain ATCC MYA-4620 / CBS 123657 / FGSC 9075 / NRRL 31084 / PH-1) (Wheat head blight fungus).